Reading from the N-terminus, the 356-residue chain is MQFVQTSTLPQKTDQKFAVQKPIAIWLFVCCALVFAMVVVGGVTRLTDSGLSIVEWQPLVGTVPPLSQNDWDELFEKYHQTPQYKKVNLGMSLEEFKTIFWWEYFHRLLGRVIGLAFFIPFLYFLMKKAVDRPLGLKLSGIFLLGALQGGMGWYMVKSGLVDNPHVSQYRLTAHLGLAFAIYAAMFWVALDLLNPGRGLSANSGLRGLLNFSTMLSALVFIMVLSGGFVAGIRAGLAYNTFPLMDGHFIPPELFMLEPWYRNFFDNMTTVQFDHRLIAWTLAILVPIFWLKSRAVPLSGSARLACTLLLIMLAVQITLGISTLLLVVPLTLAAAHQAGALLLFTAALWVNHELRRQ.

The next 5 helical transmembrane spans lie at 23–43, 105–125, 141–161, 173–193, and 212–232; these read IAIW…VGGV, FHRL…LYFL, IFLL…SGLV, AHLG…LDLL, and STML…VAGI. His274 is a binding site for heme. 3 consecutive transmembrane segments (helical) span residues 276 to 296, 307 to 327, and 329 to 349; these read LIAW…RAVP, LLLI…LLVV, and LTLA…ALWV. Residue His335 coordinates heme.

It belongs to the COX15/CtaA family. Type 2 subfamily. As to quaternary structure, interacts with CtaB. Heme b serves as cofactor.

The protein resides in the cell membrane. It catalyses the reaction Fe(II)-heme o + 2 A + H2O = Fe(II)-heme a + 2 AH2. The protein operates within porphyrin-containing compound metabolism; heme A biosynthesis; heme A from heme O: step 1/1. Functionally, catalyzes the conversion of heme O to heme A by two successive hydroxylations of the methyl group at C8. The first hydroxylation forms heme I, the second hydroxylation results in an unstable dihydroxymethyl group, which spontaneously dehydrates, resulting in the formyl group of heme A. This chain is Heme A synthase, found in Nitrosospira multiformis (strain ATCC 25196 / NCIMB 11849 / C 71).